A 282-amino-acid polypeptide reads, in one-letter code: NADPH-dependent 7-cyano-7-deazaguanine reductase (282 aa).

A substrate-binding site is contributed by 88-90 (IES). Residue 90-91 (SK) coordinates NADPH. C190 (thioimide intermediate) is an active-site residue. D197 serves as the catalytic Proton donor. Residue 229–230 (HE) coordinates substrate. 258–259 (RG) provides a ligand contact to NADPH.

This sequence belongs to the GTP cyclohydrolase I family. QueF type 2 subfamily. Homodimer.

It localises to the cytoplasm. The enzyme catalyses 7-aminomethyl-7-carbaguanine + 2 NADP(+) = 7-cyano-7-deazaguanine + 2 NADPH + 3 H(+). It participates in tRNA modification; tRNA-queuosine biosynthesis. Catalyzes the NADPH-dependent reduction of 7-cyano-7-deazaguanine (preQ0) to 7-aminomethyl-7-deazaguanine (preQ1). This Escherichia coli (strain K12 / MC4100 / BW2952) protein is NADPH-dependent 7-cyano-7-deazaguanine reductase.